An 860-amino-acid polypeptide reads, in one-letter code: Probable linoleate 9S-lipoxygenase 4 (860 aa).

In terms of domain architecture, PLAT spans 29–159; the sequence is NALDFTDLAG…RYKSDRIFFA (131 aa). The Lipoxygenase domain occupies 162-860; the sequence is PYLPSETPEL…GKGIPNSVSI (699 aa). Positions 209–246 are disordered; it reads PDQGKENVRTTLGGSADYPYPRRGRTGRPPTRTDPKSE. Residues H521, H526, H712, N716, and I860 each contribute to the Fe cation site.

The protein belongs to the lipoxygenase family. Monomer. Requires Fe cation as cofactor. In terms of tissue distribution, expressed in tubers and roots. Not detected in leaves, flowers, stems, shoot tips, or axillary buds.

Its subcellular location is the cytoplasm. The enzyme catalyses (9Z,12Z)-octadecadienoate + O2 = (9S)-hydroperoxy-(10E,12Z)-octadecadienoate. It participates in lipid metabolism; oxylipin biosynthesis. Functionally, plant lipoxygenases may be involved in a number of diverse aspects of plant physiology including growth and development, pest resistance, and senescence or responses to wounding. Catalyzes the hydroperoxidation of lipids containing a cis,cis-1,4-pentadiene structure. The chain is Probable linoleate 9S-lipoxygenase 4 (LOX1.4) from Solanum tuberosum (Potato).